A 256-amino-acid chain; its full sequence is Phosphatidylglycerol--prolipoprotein diacylglyceryl transferase 2 (256 aa).

3 helical membrane passes run 11-31 (LKIY…TLLF), 46-66 (FNAT…LYII), and 83-103 (FGNG…IALC). Arginine 130 contributes to the a 1,2-diacyl-sn-glycero-3-phospho-(1'-sn-glycerol) binding site. 3 helical membrane-spanning segments follow: residues 142-162 (AETT…PAGV), 164-184 (LYPT…FLLW), and 221-241 (VGLL…GILL).

It belongs to the Lgt family.

It localises to the cell membrane. The enzyme catalyses L-cysteinyl-[prolipoprotein] + a 1,2-diacyl-sn-glycero-3-phospho-(1'-sn-glycerol) = an S-1,2-diacyl-sn-glyceryl-L-cysteinyl-[prolipoprotein] + sn-glycerol 1-phosphate + H(+). It functions in the pathway protein modification; lipoprotein biosynthesis (diacylglyceryl transfer). Its function is as follows. Catalyzes the transfer of the diacylglyceryl group from phosphatidylglycerol to the sulfhydryl group of the N-terminal cysteine of a prolipoprotein, the first step in the formation of mature lipoproteins. The polypeptide is Phosphatidylglycerol--prolipoprotein diacylglyceryl transferase 2 (Clostridium perfringens (strain 13 / Type A)).